The following is a 257-amino-acid chain: Phycoerythrobilin:ferredoxin oxidoreductase (257 aa).

Belongs to the HY2 family.

The catalysed reaction is (3Z)-phycoerythrobilin + oxidized 2[4Fe-4S]-[ferredoxin] = 15,16-dihydrobiliverdin + reduced 2[4Fe-4S]-[ferredoxin] + 2 H(+). Its function is as follows. Catalyzes the two-electron reduction of the C2 and C3(1) diene system of 15,16-dihydrobiliverdin. This chain is Phycoerythrobilin:ferredoxin oxidoreductase (pebB), found in Prochlorococcus marinus (strain SARG / CCMP1375 / SS120).